The sequence spans 538 residues: Cytochrome P450 monooxygenase claO (538 aa).

Helical transmembrane passes span 7-27 (IGAF…KLVG) and 222-242 (INPS…PILL). Cysteine 475 contributes to the heme binding site.

Belongs to the cytochrome P450 family. Heme is required as a cofactor.

It localises to the membrane. It participates in secondary metabolite biosynthesis; terpenoid biosynthesis. Functionally, cytochrome P450 monooxygenase; part of the gene cluster that mediates the biosynthesis of clavilactone A, a meroterpenoid that features a unique benzo-fused ten-membered carbocyclic ring unit with an alpha,beta-epoxy-gamma-lactone moiety, forming an intriguing 10/5/3 tricyclic nested skeleton. Cytochrome P450 monooxygenases claO, claP, claQ, claU, and claW are close orthologs, suggesting that a redundant function or pseudogenes are present in the cla cluster. These monoxygenases are not involved in clavilactone A biosynthesis nor in its modification. ClaR, ClaS and ClaT are sufficient to produce clavilactone A. The biosynthesis begins with the prenyltransferase claS that transfers geranyl pyrophosphate (GPP) to hydroquinone to produces geranylhydroquinone. The cytochrome P450 monooxygenase claR then catalyzes the diradical coupling reaction between the intramolecular hydroquinone and allyl moieties to form the benzo-fused ten-membered carbocyclic ring unit of wigantol. Finally the cytochrome P450 monooxygenase claT exquisitely and stereoselectively assembles the alpha,beta-epoxy-gamma-lactone moiety, producing clavilactone A via arnebinol A. The chain is Cytochrome P450 monooxygenase claO from Ampulloclitocybe clavipes (Club foot).